We begin with the raw amino-acid sequence, 218 residues long: Ribose-5-phosphate isomerase A (218 aa).

Substrate is bound by residues threonine 28 to threonine 31, aspartate 81 to aspartate 84, and lysine 94 to glycine 97. Glutamate 103 serves as the catalytic Proton acceptor. Substrate is bound at residue lysine 121.

Belongs to the ribose 5-phosphate isomerase family. In terms of assembly, homodimer.

It carries out the reaction aldehydo-D-ribose 5-phosphate = D-ribulose 5-phosphate. It participates in carbohydrate degradation; pentose phosphate pathway; D-ribose 5-phosphate from D-ribulose 5-phosphate (non-oxidative stage): step 1/1. Catalyzes the reversible conversion of ribose-5-phosphate to ribulose 5-phosphate. The chain is Ribose-5-phosphate isomerase A from Thioalkalivibrio sulfidiphilus (strain HL-EbGR7).